A 354-amino-acid polypeptide reads, in one-letter code: Guanine nucleotide-binding protein G(i) subunit alpha-3 (354 aa).

The N-myristoyl glycine moiety is linked to residue glycine 2. Cysteine 3 carries S-palmitoyl cysteine lipidation. Residues 32 to 354 enclose the G-alpha domain; that stretch reads KEVKLLLLGA…KNNLKECGLY (323 aa). The interval 35 to 48 is G1 motif; sequence KLLLLGAGESGKST. GTP-binding residues include glycine 42, glutamate 43, serine 44, glycine 45, lysine 46, serine 47, threonine 48, aspartate 150, serine 151, leucine 175, arginine 176, threonine 177, arginine 178, valine 179, lysine 180, threonine 181, valine 201, glycine 203, asparagine 269, lysine 270, aspartate 272, leucine 273, cysteine 325, alanine 326, and threonine 327. Serine 47 lines the Mg(2+) pocket. Residues 173-181 are G2 motif; that stretch reads DVLRTRVKT. Residue threonine 181 participates in Mg(2+) binding. The G3 motif stretch occupies residues 196–205; the sequence is FKMFDVGGQR. Residues 265–272 form a G4 motif region; sequence ILFLNKKD. The segment at 324-329 is G5 motif; the sequence is TCATDT.

The protein belongs to the G-alpha family. G(i/o/t/z) subfamily. Heterotrimeric G proteins are composed of 3 units; alpha, beta and gamma. The alpha subunit contains the guanine nucleotide binding site. GTP binding causes dissociation of the heterotrimer, liberating the individual subunits so that they can interact with downstream effector proteins. Forms a complex with CCDC88A/GIV and EGFR which leads to enhanced EGFR signaling and triggering of cell migration; ligand stimulation is required for recruitment of GNAI3 to the complex. Interacts (inactive GDP-bound form) with CCDC88A/GIV (via GBA motif); the interaction leads to activation of GNAI3. Interacts (inactive GDP-bound form) with CCDC88C/DAPLE (via GBA motif); the interaction leads to activation of GNAI3. Interacts (inactive GDP-bound form) with NUCB1 (via GBA motif) and NUCB2 (via GBA motif); the interaction leads to activation of GNAI3. Interacts (inactive GDP-bound form) with PLCD4 (via GBA motif); the interaction leads to activation of GNAI3. Interacts with INSR; the interaction is probably mediated by CCDC88A/GIV. Interacts with GPSM1. Interacts (GDP-bound form) with GPSM2 (via GoLoco domains). Does not interact with RGS2. Interacts with RGS8 and RGS10; this strongly enhances the intrinsic GTPase activity. Interacts with RGS16; this strongly enhances the intrinsic GTPase activity. Interacts with RGS12. Interacts (via active GTP- or inactive GDP-bound form) with RGS14. Interacts (via active GTP-bound form) with TRPC5 (via ANK repeats) in a homotetrameric ion channel; the interaction is direct and activates the channel activity. In terms of tissue distribution, ubiquitously expressed.

Its subcellular location is the cytoplasm. The protein localises to the cell membrane. The protein resides in the cytoskeleton. It localises to the microtubule organizing center. It is found in the centrosome. Heterotrimeric guanine nucleotide-binding proteins (G proteins) function as transducers downstream of G protein-coupled receptors (GPCRs) in numerous signaling cascades. The alpha chain contains the guanine nucleotide binding site and alternates between an active, GTP-bound state and an inactive, GDP-bound state. Signaling by an activated GPCR promotes GDP release and GTP binding. The alpha subunit has a low GTPase activity that converts bound GTP to GDP, thereby terminating the signal. Both GDP release and GTP hydrolysis are modulated by numerous regulatory proteins. Signaling is mediated via effector proteins, such as adenylate cyclase. Inhibits adenylate cyclase activity, leading to decreased intracellular cAMP levels. Stimulates the activity of receptor-regulated K(+) channels. The active GTP-bound form prevents the association of RGS14 with centrosomes and is required for the translocation of RGS14 from the cytoplasm to the plasma membrane. May play a role in cell division. The active GTP-bound form activates the calcium permeant TRPC5 ion channels. The sequence is that of Guanine nucleotide-binding protein G(i) subunit alpha-3 (GNAI3) from Cavia porcellus (Guinea pig).